The primary structure comprises 323 residues: UPF0612 protein C569.01c (323 aa).

Coiled coils occupy residues 27 to 63 (IKRYERSVDSTLLEIDENKREALEKYIEERDRKMKYE) and 131 to 225 (NEMN…DARS).

It belongs to the UPF0612 family.

The chain is UPF0612 protein C569.01c from Schizosaccharomyces pombe (strain 972 / ATCC 24843) (Fission yeast).